The chain runs to 583 residues: RuBisCO large subunit-binding protein subunit alpha, chloroplastic (583 aa).

Over residues 1 to 14 the composition is skewed to polar residues; that stretch reads MATANALSSPSVLC. The tract at residues 1-35 is disordered; the sequence is MATANALSSPSVLCSSRQGKLSGGSQQKGQRVSYR. The transit peptide at 1 to 45 directs the protein to the chloroplast; it reads MATANALSSPSVLCSSRQGKLSGGSQQKGQRVSYRKANRRFSLRA. Residues 15-31 are compositionally biased toward low complexity; sequence SSRQGKLSGGSQQKGQR. Position 89 is a phosphoserine (S89).

Belongs to the chaperonin (HSP60) family. In terms of assembly, oligomer of probably six alpha and six beta subunits.

The protein localises to the plastid. The protein resides in the chloroplast. Its function is as follows. This protein binds RuBisCO small and large subunits and is implicated in the assembly of the enzyme oligomer. This is RuBisCO large subunit-binding protein subunit alpha, chloroplastic from Brassica napus (Rape).